The primary structure comprises 230 residues: uncharacterized protein (230 aa).

This is an uncharacterized protein from Mycobacterium tuberculosis (strain ATCC 25618 / H37Rv).